The following is a 248-amino-acid chain: Meiotically up-regulated gene 65 protein (248 aa).

In terms of biological role, has a role in meiosis. The chain is Meiotically up-regulated gene 65 protein (mug65) from Schizosaccharomyces pombe (strain 972 / ATCC 24843) (Fission yeast).